Here is an 874-residue protein sequence, read N- to C-terminus: Endothelial PAS domain-containing protein 1 (874 aa).

The tract at residues 1-23 (MTADKEKKRSSSELRKEKSRDAA) is disordered. The bHLH domain occupies 14–67 (LRKEKSRDAARCRRSKETEVFYELAHELPLPHSVSSHLDKASIMRLAISFLRTH). The DNA-binding stretch occupies residues 26–53 (RRSKETEVFYELAHELPLPHSVSSHLDK). One can recognise a PAS 1 domain in the interval 84–154 (DQQMDNLYLK…ENLTLKNGSG (71 aa)). A required for heterodimer formation with ARNT region spans residues 171–192 (RMKCTVTNRGRTVNLKSATWKV). Residues 230 to 300 (QHPSHMDIPL…KSHQNLCTKG (71 aa)) form the PAS 2 domain. Residues 304-347 (SGQYRMLAKHGGYVWLETQGTVIYNPRNLQPQCIMCVNYVLSEI) enclose the PAC domain. At Pro405 the chain carries 4-hydroxyproline. The disordered stretch occupies residues 438-489 (WVSGLRSHSAQSESGSLPAFTVPQADTPGNTTPSASSSSSCSTPSSPEDYYS). Polar residues predominate over residues 443–452 (RSHSAQSESG). The span at 464–484 (TPGNTTPSASSSSSCSTPSSP) shows a compositional bias: low complexity. An NTAD region spans residues 495-541 (LKIEVIEKLFAMDTEPRDPGSTQTDFSELDLETLAPYIPMDGEDFQL). Pro530 carries the 4-hydroxyproline modification. The interval 777-803 (LGQPLRHLPPPQPPSTRSSGENAKTGF) is disordered. Positions 834-874 (SFEPYLLPELTRYDCEVNVPVPGSSTLLQGRDLLRALDQAT) are CTAD. Phosphothreonine is present on Thr844. A (3S)-3-hydroxyasparagine modification is found at Asn851.

Interacts with HIF3A isoform 2. Efficient DNA binding requires dimerization with another bHLH protein. Heterodimerizes with ARNT; heterodimer binds to core DNA sequence 5'-TACGTG-3' within the hypoxia response element (HRE) of target gene promoters. Interacts with CREBBP. Interacts with EGLN1. Interacts with VHL. In normoxia, is probably hydroxylated on Pro-405 and Pro-530 by EGLN1/PHD1, EGLN2/PHD2 and/or EGLN3/PHD3. The hydroxylated prolines promote interaction with VHL, initiating rapid ubiquitination and subsequent proteasomal degradation. Under hypoxia, proline hydroxylation is impaired and ubiquitination is attenuated, resulting in stabilization. In terms of processing, in normoxia, is hydroxylated on Asn-851 by HIF1AN thus probably abrogating interaction with CREBBP and EP300 and preventing transcriptional activation. Post-translationally, phosphorylated on multiple sites in the CTAD. The iron and 2-oxoglutarate dependent 3-hydroxylation of asparagine is (S) stereospecific within HIF CTAD domains. As to expression, expressed in most tissues, with highest levels in lung, followed by heart, kidney, brain and liver. Predominantly expressed in endothelial cells. Also found in smooth muscle cells of the uterus, neurons, and brown adipose tissue. High expression in embryonic choroid plexus and kidney glomeruli.

The protein localises to the nucleus. Its subcellular location is the nucleus speckle. Functionally, transcription factor involved in the induction of oxygen regulated genes. Heterodimerizes with ARNT; heterodimer binds to core DNA sequence 5'-TACGTG-3' within the hypoxia response element (HRE) of target gene promoters. Regulates the vascular endothelial growth factor (VEGF) expression and seems to be implicated in the development of blood vessels and the tubular system of lung. May also play a role in the formation of the endothelium that gives rise to the blood brain barrier. Potent activator of the Tie-2 tyrosine kinase expression. Activation requires recruitment of transcriptional coactivators such as CREBBP and probably EP300. Interaction with redox regulatory protein APEX seems to activate CTAD. In Mus musculus (Mouse), this protein is Endothelial PAS domain-containing protein 1 (Epas1).